The sequence spans 394 residues: Protein TsgA homolog (394 aa).

The next 12 helical transmembrane spans lie at 11-31 (WISF…GMVM), 51-71 (FLNT…EIIP), 76-96 (LVFG…GHNL), 101-121 (ACMF…TFLI), 134-154 (LLFT…IAAT), 160-180 (VAWY…FILT), 206-226 (IGVL…LGFI), 246-266 (GLVS…SVAL), 274-294 (IVTV…SSQQ), 297-317 (MLSM…TTLI), 334-354 (FILT…GPIV), and 363-383 (LATA…LGFV).

Belongs to the major facilitator superfamily. TsgA family.

It is found in the cell inner membrane. This chain is Protein TsgA homolog, found in Edwardsiella ictaluri (strain 93-146).